Reading from the N-terminus, the 682-residue chain is UvrABC system protein B (682 aa).

Residues aspartate 27–isoleucine 414 enclose the Helicase ATP-binding domain. Glycine 40 to threonine 47 contributes to the ATP binding site. Positions tyrosine 93 to isoleucine 116 match the Beta-hairpin motif. The region spanning glutamine 432–leucine 594 is the Helicase C-terminal domain. The interval alanine 609–alanine 628 is disordered. The UVR domain maps to glycine 642–arginine 677.

This sequence belongs to the UvrB family. As to quaternary structure, forms a heterotetramer with UvrA during the search for lesions. Interacts with UvrC in an incision complex.

Its subcellular location is the cytoplasm. The UvrABC repair system catalyzes the recognition and processing of DNA lesions. A damage recognition complex composed of 2 UvrA and 2 UvrB subunits scans DNA for abnormalities. Upon binding of the UvrA(2)B(2) complex to a putative damaged site, the DNA wraps around one UvrB monomer. DNA wrap is dependent on ATP binding by UvrB and probably causes local melting of the DNA helix, facilitating insertion of UvrB beta-hairpin between the DNA strands. Then UvrB probes one DNA strand for the presence of a lesion. If a lesion is found the UvrA subunits dissociate and the UvrB-DNA preincision complex is formed. This complex is subsequently bound by UvrC and the second UvrB is released. If no lesion is found, the DNA wraps around the other UvrB subunit that will check the other stand for damage. This chain is UvrABC system protein B, found in Oleidesulfovibrio alaskensis (strain ATCC BAA-1058 / DSM 17464 / G20) (Desulfovibrio alaskensis).